A 31-amino-acid chain; its full sequence is Nemertide alpha-2 (31 aa).

3 disulfide bridges follow: Cys-2-Cys-16, Cys-9-Cys-20, and Cys-15-Cys-26. 4-hydroxyproline occurs at positions 28 and 29.

This sequence belongs to the nemertide family. Confined to the epidermis and to the mucus layer.

The protein localises to the secreted. Functionally, toxin with similar potency against both insect and mammalian sodium channels (Nav). Delays the inactivation of most Nav channels tested (B.germanica (BgNav1); EC(50)=87.2 nM, human Nav1.1/SCN1A; EC(50)=125.8 nM, rat Nav1.2/SCN2A; EC(50)=97.9 nM, rat Nav1.3/SCN3A; EC(50)=127.7 nM, rat Nav1.4/SCN4A; EC(50)=1150.3 nM, human Nav1.5/SCN5A; EC(50)=149.2 nM, mouse Nav1.6/SCN8A; EC(50)=1361.8 nM, human Nav1.9/SCN9A; EC(50)=1296.7 nM). Inactivation is completely prevented by a concentration of 1 uM, resulting in sustained, non-inactivating current. In addition, the toxin significantly enhances the recovery from inactivation, and the open state is not required for the toxin to interact with the channel. In vivo, injection into brine shrimp (Artemia salina) stops movement or causes death after 24 hours (EC(50)=2.9 uM). This chain is Nemertide alpha-2, found in Lineus longissimus (Bootlace worm).